Consider the following 202-residue polypeptide: Neuroligin-3 (202 aa).

Topologically, residues 1-202 (RYGSPTYFYA…TGTRMQGHSW (202 aa)) are extracellular. Cysteine 15 and cysteine 49 are oxidised to a cystine. N-linked (GlcNAc...) asparagine glycosylation occurs at asparagine 50. Residues 154–202 (LRIPPTAPTSPAGPMARPGAPSGQPSHLPTATRMPRGPGTGTRMQGHSW) form a disordered region.

The protein belongs to the type-B carboxylesterase/lipase family. In terms of assembly, homodimer, and heterodimer with NLGN1 and NLGN2. Interacts with neurexins NRXN1, NRXN2 and NRXN3. Interaction with neurexins is mediated by heparan sulfate glycan modification on neurexin. Interacts (via its C-terminus) with DLG4/PSD-95 (via PDZ domain 3).

The protein resides in the cell membrane. The protein localises to the synapse. Its function is as follows. Cell surface protein involved in cell-cell-interactions via its interactions with neurexin family members. Plays a role in synapse function and synaptic signal transmission, and probably mediates its effects by recruiting and clustering other synaptic proteins. May promote the initial formation of synapses, but is not essential for this. May also play a role in glia-glia or glia-neuron interactions in the developing peripheral nervous system. In Macaca mulatta (Rhesus macaque), this protein is Neuroligin-3 (NLGN3).